The following is a 251-amino-acid chain: Maleate isomerase (251 aa).

Residues Asn14, 76–78 (CLV), Tyr133, and Asn163 contribute to the substrate site. Cys76 (nucleophile) is an active-site residue. At Cys76 the chain carries S-(2-succinyl)cysteine. Catalysis depends on Cys194, which acts as the Proton donor. Residue 195–196 (VQ) participates in substrate binding.

It belongs to the maleate isomerase family. As to quaternary structure, homodimer.

It catalyses the reaction maleate = fumarate. In terms of biological role, catalyzes cis-trans isomerization of the C2-C3 double bond in maleate to yield fumarate. Shows a strict specificity for maleate, with no activity detected toward structurally related substrates including citraconate, mesaconate, dimethylmaleate, and maleamide. The sequence is that of Maleate isomerase from Nocardia farcinica (strain IFM 10152).